The chain runs to 1038 residues: Importin-7 (1038 aa).

An N-acetylmethionine modification is found at Met-1. In terms of domain architecture, Importin N-terminal spans 22 to 101; sequence AERQLNEAHK…RENIVEAIIH (80 aa). Residues 881-910 form a disordered region; that stretch reads EHENDSDDDDEAEDDDETEELGSDEDDIDE. Residues 884 to 910 show a composition bias toward acidic residues; it reads NDSDDDDEAEDDDETEELGSDEDDIDE. Ser-886 carries the phosphoserine modification. Thr-898 is modified (phosphothreonine). Phosphoserine is present on residues Ser-903 and Ser-1020.

Belongs to the importin beta family. As to quaternary structure, forms a heterodimer with KPNB1. Interacts with histone H1. Interacts with H2A, H2B, H3 and H4 histones. Interacts with SNUPN and XPO1. Interacts with RPS7 and RPL5. Interacts with RPL23A (via BIB domain). Binds directly to nuclear pore complexes. Interacts with SMAD4 and NUP93; translocates SMAD4 to the nucleus through the NPC upon BMP7 stimulation resulting in activation of SMAD4 signaling. Interacts with phosphorylated SMAD2; the interaction facilitates translocation of SMAD2 to the nucleus. Interacts with SRP19. Interacts with RUNX2; the interaction inhibits RUNX2 nuclear translocation in osteoblasts. Interacts with HDAC6, DLX3 and KLF4; the interaction facilitates HDAC6, DLX3 and KLF4 nuclear translocation in dental papilla cells. (Microbial infection) Interacts with HIV-1 reverse transcription complex integrase and rev.

It is found in the cytoplasm. The protein resides in the nucleus. Functions in nuclear protein import, either by acting as autonomous nuclear transport receptor or as an adapter-like protein in association with the importin-beta subunit KPNB1. Acting autonomously, is thought to serve itself as receptor for nuclear localization signals (NLS) and to promote translocation of import substrates through the nuclear pore complex (NPC) by an energy requiring, Ran-dependent mechanism. At the nucleoplasmic side of the NPC, Ran binds to importin, the importin/substrate complex dissociates and importin is re-exported from the nucleus to the cytoplasm where GTP hydrolysis releases Ran. The directionality of nuclear import is thought to be conferred by an asymmetric distribution of the GTP- and GDP-bound forms of Ran between the cytoplasm and nucleus. Mediates autonomously the nuclear import of ribosomal proteins RPL23A, RPS7 and RPL5. In association with KPNB1 mediates the nuclear import of H1 histone and the Ran-binding site of IPO7 is not required but synergizes with that of KPNB1 in importin/substrate complex dissociation. Promotes odontoblast differentiation via promoting nuclear translocation of DLX3, KLF4, SMAD2, thereby facilitating the transcription of target genes that play a role in odontoblast differentiation. Facilitates BMP4-induced translocation of SMAD1 to the nucleus and recruitment to the MSX1 gene promoter, thereby promotes the expression of the odontogenic regulator MSX1 in dental mesenchymal cells. Also promotes odontoblast differentiation by facilitating the nuclear translocation of HDAC6 and subsequent repression of RUNX2 expression. Inhibits osteoblast differentiation by inhibiting nuclear translocation of RUNX2 and therefore inhibition of RUNX2 target gene transcription. In vitro, mediates nuclear import of H2A, H2B, H3 and H4 histones. Its function is as follows. (Microbial infection) Mediates the nuclear import of HIV-1 reverse transcription complex (RTC) integrase. Binds and mediates the nuclear import of HIV-1 Rev. The polypeptide is Importin-7 (IPO7) (Homo sapiens (Human)).